A 362-amino-acid chain; its full sequence is Porin Omp2b (362 aa).

Positions 1-22 are cleaved as a signal peptide; that stretch reads MNIKSLLLGSAAALVAASGAQA.

The protein belongs to the alphaproteobacteria porin family. Homotrimer.

The protein localises to the cell outer membrane. In terms of biological role, forms passive diffusion pores that allow small molecular weight hydrophilic materials across the outer membrane. This is Porin Omp2b (omp2b) from Brucella suis biovar 1 (strain 1330).